A 468-amino-acid polypeptide reads, in one-letter code: Sushi repeat-containing protein SRPX2 (468 aa).

Residues 1 to 25 (MMTSPLTQRGALSLLLLLMPAVTPT) form the signal peptide. Sushi domains are found at residues 72-122 (ATCY…YCRQ), 123-181 (IRCH…VCVD), and 265-324 (RRCP…VCTP). 4 disulfide bridges follow: C74/C108, C94/C120, C125/C166, and C152/C179. The region spanning 180–264 (VDIDPPKIRC…SCKFIVKVQV (85 aa)) is the HYR domain. 2 disulfide bridges follow: C267–C309 and C295–C322.

As to quaternary structure, forms homooligomers. Interacts with PLAUR (via the UPAR/Ly6 domains), ADAMTS4 and CTSB. Interacts with HGF; the interaction increases the mitogenic activity of HGF. In terms of processing, contains chondroitin sulfate chains. In terms of tissue distribution, expressed in angiogenic endothelial cells (at protein level).

It localises to the secreted. It is found in the cytoplasm. The protein resides in the cell surface. The protein localises to the synapse. In terms of biological role, acts as a ligand for the urokinase plasminogen activator surface receptor. Plays a role in angiogenesis by inducing endothelial cell migration and the formation of vascular network (cords). Involved in cellular migration and adhesion. Increases the phosphorylation levels of FAK. Interacts with and increases the mitogenic activity of HGF. Promotes synapse formation. Required for ultrasonic vocalizations. The polypeptide is Sushi repeat-containing protein SRPX2 (Srpx2) (Mus musculus (Mouse)).